The chain runs to 931 residues: Valine--tRNA ligase (931 aa).

The short motif at 43–53 (PNVTGALHIGH) is the 'HIGH' region element. Residues 351-370 (IPHTDKDGNAHDAEPRTIQT) are disordered. Over residues 353–365 (HTDKDGNAHDAEP) the composition is skewed to basic and acidic residues. The 'KMSKS' region signature appears at 552 to 556 (KMSKS). Lysine 555 is an ATP binding site. The disordered stretch occupies residues 691–717 (LQGRGLGEGDEAVPAPADGPLSPALSP). Residues 864–930 (VIDIAAERER…DRLSAALARL (67 aa)) are a coiled coil.

It belongs to the class-I aminoacyl-tRNA synthetase family. ValS type 1 subfamily. As to quaternary structure, monomer.

It is found in the cytoplasm. The enzyme catalyses tRNA(Val) + L-valine + ATP = L-valyl-tRNA(Val) + AMP + diphosphate. In terms of biological role, catalyzes the attachment of valine to tRNA(Val). As ValRS can inadvertently accommodate and process structurally similar amino acids such as threonine, to avoid such errors, it has a 'posttransfer' editing activity that hydrolyzes mischarged Thr-tRNA(Val) in a tRNA-dependent manner. The chain is Valine--tRNA ligase from Sphingopyxis alaskensis (strain DSM 13593 / LMG 18877 / RB2256) (Sphingomonas alaskensis).